A 211-amino-acid chain; its full sequence is Prolactin (211 aa).

Residues 1–24 (MTHRRTKLFMMAAVVSYVMTSCGA) form the signal peptide. Cystine bridges form between C70–C184 and C201–C211.

The protein belongs to the somatotropin/prolactin family.

Its subcellular location is the secreted. The polypeptide is Prolactin (prl) (Paralichthys olivaceus (Bastard halibut)).